The chain runs to 81 residues: Small ribosomal subunit protein bS18 (81 aa).

This sequence belongs to the bacterial ribosomal protein bS18 family. As to quaternary structure, part of the 30S ribosomal subunit. Forms a tight heterodimer with protein bS6.

Its function is as follows. Binds as a heterodimer with protein bS6 to the central domain of the 16S rRNA, where it helps stabilize the platform of the 30S subunit. The chain is Small ribosomal subunit protein bS18 from Parvibaculum lavamentivorans (strain DS-1 / DSM 13023 / NCIMB 13966).